Consider the following 162-residue polypeptide: Methyl-coenzyme M reductase II operon protein D (162 aa).

MCR is composed of three subunits: alpha, beta, and gamma. The function of protein D is not known.

The protein is Methyl-coenzyme M reductase II operon protein D (mrtD) of Methanothermobacter thermautotrophicus (strain ATCC 29096 / DSM 1053 / JCM 10044 / NBRC 100330 / Delta H) (Methanobacterium thermoautotrophicum).